The sequence spans 50 residues: Large ribosomal subunit protein eL39 (50 aa).

It belongs to the eukaryotic ribosomal protein eL39 family.

This chain is Large ribosomal subunit protein eL39 (rpl39e), found in Archaeoglobus fulgidus (strain ATCC 49558 / DSM 4304 / JCM 9628 / NBRC 100126 / VC-16).